Here is a 118-residue protein sequence, read N- to C-terminus: MAHLTQSVEYASTACCWLAGGRHAAEQPGSGGIAGNLPAPSSPRSFRSWRRRGSSRPAKGSRVTACQGAGRPSASSSSSTPSRARSRCCECQEIRGRCAVFDDRPPDWATSASAPSTP.

The disordered stretch occupies residues 25–85; it reads AEQPGSGGIA…SSSSTPSRAR (61 aa). Residues 71-83 show a composition bias toward low complexity; it reads RPSASSSSSTPSR.

This is an uncharacterized protein from Azospirillum brasilense.